We begin with the raw amino-acid sequence, 307 residues long: Nicotinamide/nicotinic acid mononucleotide adenylyltransferase 2 (307 aa).

NAD(+) is bound by residues Ser16 and Phe17. His24 provides a ligand contact to ATP. NAD(+) contacts are provided by Trp92 and Thr95. Residues Cys164 and Cys165 are each lipidated (S-palmitoyl cysteine). Gly200, Asp202, Leu212, Trp213, and Arg232 together coordinate NAD(+). 271–274 (TKSR) is a binding site for ATP.

This sequence belongs to the eukaryotic NMN adenylyltransferase family. In terms of assembly, monomer. Mg(2+) is required as a cofactor. In terms of processing, degraded in response to injured neurite. Degradation is caused by polyubiquitination by MYCBP2 after recognition by FBXO45. Palmitoylated; palmitoylation is required for membrane association. Expressed predominantly in the brain and nervous system.

The protein localises to the golgi apparatus membrane. It localises to the cytoplasmic vesicle membrane. The protein resides in the cytoplasm. Its subcellular location is the cell projection. It is found in the axon. It catalyses the reaction beta-nicotinamide D-ribonucleotide + ATP + H(+) = diphosphate + NAD(+). The catalysed reaction is nicotinate beta-D-ribonucleotide + ATP + H(+) = deamido-NAD(+) + diphosphate. Its pathway is cofactor biosynthesis; NAD(+) biosynthesis; NAD(+) from nicotinamide D-ribonucleotide: step 1/1. It functions in the pathway cofactor biosynthesis; NAD(+) biosynthesis; deamido-NAD(+) from nicotinate D-ribonucleotide: step 1/1. Its activity is regulated as follows. Inhibited by P1-(adenosine-5')-P3-(nicotinamide-riboside-5')-triphosphate (Np3AD) and P1-(adenosine-5')-P4-(nicotinamide-riboside-5')-tetraphosphate (Np4AD). Functionally, nicotinamide/nicotinate-nucleotide adenylyltransferase that acts as an axon maintenance factor. Axon survival factor required for the maintenance of healthy axons: acts by delaying Wallerian axon degeneration, an evolutionarily conserved process that drives the loss of damaged axons. Catalyzes the formation of NAD(+) from nicotinamide mononucleotide (NMN) and ATP. Can also use the deamidated form; nicotinic acid mononucleotide (NaMN) as substrate but with a lower efficiency. Cannot use triazofurin monophosphate (TrMP) as substrate. Also catalyzes the reverse reaction, i.e. the pyrophosphorolytic cleavage of NAD(+). For the pyrophosphorolytic activity prefers NAD(+), NADH and NaAD as substrates and degrades nicotinic acid adenine dinucleotide phosphate (NHD) less effectively. Fails to cleave phosphorylated dinucleotides NADP(+), NADPH and NaADP(+). Also acts as an activator of ADP-ribosylation by supporting the catalytic activity of PARP16 and promoting mono-ADP-ribosylation of ribosomes by PARP16. May be involved in the maintenance of axonal integrity. The chain is Nicotinamide/nicotinic acid mononucleotide adenylyltransferase 2 from Mus musculus (Mouse).